Here is a 284-residue protein sequence, read N- to C-terminus: Bifunctional protein FolD (284 aa).

NADP(+) is bound by residues 166-168 (GRS) and serine 191.

The protein belongs to the tetrahydrofolate dehydrogenase/cyclohydrolase family. Homodimer.

The catalysed reaction is (6R)-5,10-methylene-5,6,7,8-tetrahydrofolate + NADP(+) = (6R)-5,10-methenyltetrahydrofolate + NADPH. The enzyme catalyses (6R)-5,10-methenyltetrahydrofolate + H2O = (6R)-10-formyltetrahydrofolate + H(+). The protein operates within one-carbon metabolism; tetrahydrofolate interconversion. Its function is as follows. Catalyzes the oxidation of 5,10-methylenetetrahydrofolate to 5,10-methenyltetrahydrofolate and then the hydrolysis of 5,10-methenyltetrahydrofolate to 10-formyltetrahydrofolate. The protein is Bifunctional protein FolD of Leptospira borgpetersenii serovar Hardjo-bovis (strain JB197).